A 245-amino-acid chain; its full sequence is MMKKRVKRVLFKISGEALSDGDSSNRISEERLSRLIAELKVVRNADVEVALVIGGGNILRGLSQSQSLQINRVSADQMGMLATLINGMALADALKTEDVPNLLTSTLSCPQLAELYNPQKASDALSQGKVVICTMGAGAPYLTTDTGAALRACELKVDVLLKATMHVDGVYDQDPRECADAVRYDHISYRDFLSQGLGAIDPAAISLCMEAGIPIKMFSFARHSLEEAVFNTVGTVISSTEGGQL.

12–15 contacts ATP; it reads KISG. Gly-55 provides a ligand contact to UMP. ATP is bound by residues Gly-56 and Arg-60. UMP contacts are provided by residues Asp-76 and 137–144; that span reads AGAPYLTT. Thr-164, Tyr-171, and Asp-174 together coordinate ATP.

This sequence belongs to the UMP kinase family. As to quaternary structure, homohexamer.

It localises to the cytoplasm. The enzyme catalyses UMP + ATP = UDP + ADP. It participates in pyrimidine metabolism; CTP biosynthesis via de novo pathway; UDP from UMP (UMPK route): step 1/1. With respect to regulation, inhibited by UTP. Functionally, catalyzes the reversible phosphorylation of UMP to UDP. This is Uridylate kinase from Chlamydia trachomatis serovar D (strain ATCC VR-885 / DSM 19411 / UW-3/Cx).